A 267-amino-acid polypeptide reads, in one-letter code: 4-hydroxy-tetrahydrodipicolinate reductase (267 aa).

NAD(+) contacts are provided by residues 8–13 (GAAGRM) and D34. R35 lines the NADP(+) pocket. Residues 98 to 100 (GTT) and 122 to 125 (AANF) each bind NAD(+). H155 (proton donor/acceptor) is an active-site residue. H156 provides a ligand contact to (S)-2,3,4,5-tetrahydrodipicolinate. K159 (proton donor) is an active-site residue. (S)-2,3,4,5-tetrahydrodipicolinate is bound at residue 165–166 (GT).

The protein belongs to the DapB family.

The protein localises to the cytoplasm. The enzyme catalyses (S)-2,3,4,5-tetrahydrodipicolinate + NAD(+) + H2O = (2S,4S)-4-hydroxy-2,3,4,5-tetrahydrodipicolinate + NADH + H(+). The catalysed reaction is (S)-2,3,4,5-tetrahydrodipicolinate + NADP(+) + H2O = (2S,4S)-4-hydroxy-2,3,4,5-tetrahydrodipicolinate + NADPH + H(+). The protein operates within amino-acid biosynthesis; L-lysine biosynthesis via DAP pathway; (S)-tetrahydrodipicolinate from L-aspartate: step 4/4. Catalyzes the conversion of 4-hydroxy-tetrahydrodipicolinate (HTPA) to tetrahydrodipicolinate. This chain is 4-hydroxy-tetrahydrodipicolinate reductase, found in Ectopseudomonas mendocina (strain ymp) (Pseudomonas mendocina).